The following is a 63-amino-acid chain: DNA-directed RNA polymerase 7 kDa subunit (63 aa).

It belongs to the poxviridae DNA-directed RNA polymerase 7 kDa subunit family. The DNA-dependent RNA polymerase used for intermediate and late genes expression consists of eight subunits 147 kDa, 133 kDa, 35 kDa, 30 kDa, 22 kDa, 19 kDa, 18 kDa and 7 kDa totalling more than 500 kDa in mass. The same holoenzyme, with the addition of the transcription-specificity factor RAP94, is used for early gene expression.

It localises to the virion. It carries out the reaction RNA(n) + a ribonucleoside 5'-triphosphate = RNA(n+1) + diphosphate. In terms of biological role, part of the DNA-dependent RNA polymerase which catalyzes the transcription of viral DNA into RNA using the four ribonucleoside triphosphates as substrates. Responsible for the transcription of early, intermediate and late genes. DNA-dependent RNA polymerase associates with the early transcription factor (ETF) thereby allowing the early genes transcription. Late transcription, and probably also intermediate transcription, require newly synthesized RNA polymerase. This Molluscum contagiosum virus subtype 1 (MOCV) protein is DNA-directed RNA polymerase 7 kDa subunit (RPO7).